The chain runs to 242 residues: MRVPVRWVLWDVKDTLLKVRRSVGEQYCREAQQAGLQLSPAQVETAFRLAYKQKSQLLPNYGRAQGMDSQVWWTGLVRDTFGQCGVHDPALLDKLANNLYHNFCGPENWEVFSDSNSTLKSCTALGLKQGVVSNFDRRLEGILRGCGLLTHFSFIVTSEDARVAKPDPAIFSQALERCGVPASSVVHVGDHYVKDYLTSRSLGIRGYLLNRKDGQKTHLDIPPEHILQSLDELPARLQHNTD.

This sequence belongs to the HAD-like hydrolase superfamily.

This chain is Haloacid dehalogenase-like hydrolase domain-containing protein 3 (hdhd3), found in Danio rerio (Zebrafish).